A 91-amino-acid chain; its full sequence is Sec-independent protein translocase protein TatA (91 aa).

Residues 3–23 form a helical membrane-spanning segment; the sequence is FFGIGLPEMLVILAIALLVFG. Positions 57–91 are disordered; sequence DRTPATPAEATVEPPVLDSAPTEAVTVEKQTETQV. Over residues 59-72 the composition is skewed to low complexity; the sequence is TPATPAEATVEPPV.

It belongs to the TatA/E family. As to quaternary structure, forms a complex with TatC.

The protein resides in the cell inner membrane. In terms of biological role, part of the twin-arginine translocation (Tat) system that transports large folded proteins containing a characteristic twin-arginine motif in their signal peptide across membranes. TatA could form the protein-conducting channel of the Tat system. This is Sec-independent protein translocase protein TatA from Synechococcus elongatus (strain ATCC 33912 / PCC 7942 / FACHB-805) (Anacystis nidulans R2).